The following is a 178-amino-acid chain: MSSNNDARKNQPLINDQIRFRTMVVIDDHGNNLGEMNRIDALNLAASKNLDLVVIAKKGNIPVTKILDYGKYKYEQKRRQKESRKNQTIIKVKEIKIKPMIGEHDLKVRAENAKRWLEDKDNVKFVIEARGRMCTKDEFIVQAYEKFIDLIKDYGTVVQANKKVSNYRYETIIEPIKK.

The protein belongs to the IF-3 family. In terms of assembly, monomer.

It is found in the cytoplasm. IF-3 binds to the 30S ribosomal subunit and shifts the equilibrium between 70S ribosomes and their 50S and 30S subunits in favor of the free subunits, thus enhancing the availability of 30S subunits on which protein synthesis initiation begins. The chain is Translation initiation factor IF-3 from Ureaplasma parvum serovar 3 (strain ATCC 700970).